The following is a 760-amino-acid chain: Rho GTPase-activating protein 26 (760 aa).

The 256-residue stretch at 7-262 (EFSECCLDSP…MKENPHEHKN (256 aa)) folds into the BAR domain. Positions 265 to 369 (PYTMEGYLYV…WMEAMDGREP (105 aa)) constitute a PH domain. The region spanning 383 to 568 (AQLDSIGFSI…ILIENHEKIF (186 aa)) is the Rho-GAP domain. Disordered stretches follow at residues 571 to 617 (VPET…ESRN) and 658 to 701 (PNRP…SPIS). Polar residues predominate over residues 605 to 617 (HTAQPNEKQESRN). Positions 674–701 (LSPSWPMFSAPSSPMPTSSTSSDSSPIS) are enriched in low complexity. In terms of domain architecture, SH3 spans 702–760 (SPLRKARALYACKAEHDSELSFTAGTVFDNVHPSQEPGWLEGTLNGKTGLIPENYVEFL).

In terms of assembly, binds to the C-terminus of PTK2/FAK1. In terms of tissue distribution, detected in embryonic brain and liver, and at low levels in embryonic eye, heart, lung, intestine and skeletal muscle.

The protein localises to the cell junction. The protein resides in the focal adhesion. Its subcellular location is the cytoplasm. It is found in the cytoskeleton. It localises to the endosome membrane. Its function is as follows. GTPase-activating protein for RHOA and CDC42. May be involved in the regulation of neosynthesized protein export through a Rab-endososomal dependent export route. The sequence is that of Rho GTPase-activating protein 26 (ARHGAP26) from Gallus gallus (Chicken).